The chain runs to 388 residues: 3-dehydroquinate synthase (388 aa).

NAD(+) contacts are provided by residues 85-90 (DGEQYK), 119-123 (GVIGD), 143-144 (TT), Lys156, Lys165, and 183-186 (TLKT). Residues Glu198, His261, and His278 each contribute to the Zn(2+) site.

This sequence belongs to the sugar phosphate cyclases superfamily. Dehydroquinate synthase family. Co(2+) is required as a cofactor. The cofactor is Zn(2+). Requires NAD(+) as cofactor.

Its subcellular location is the cytoplasm. It catalyses the reaction 7-phospho-2-dehydro-3-deoxy-D-arabino-heptonate = 3-dehydroquinate + phosphate. It participates in metabolic intermediate biosynthesis; chorismate biosynthesis; chorismate from D-erythrose 4-phosphate and phosphoenolpyruvate: step 2/7. Functionally, catalyzes the conversion of 3-deoxy-D-arabino-heptulosonate 7-phosphate (DAHP) to dehydroquinate (DHQ). This chain is 3-dehydroquinate synthase, found in Psychrobacter arcticus (strain DSM 17307 / VKM B-2377 / 273-4).